We begin with the raw amino-acid sequence, 176 residues long: ATP synthase subunit b (176 aa).

A helical transmembrane segment spans residues 26–45 (VINLAIIIGVLVYFGRGLLG).

It belongs to the ATPase B chain family. As to quaternary structure, F-type ATPases have 2 components, F(1) - the catalytic core - and F(0) - the membrane proton channel. F(1) has five subunits: alpha(3), beta(3), gamma(1), delta(1), epsilon(1). F(0) has four main subunits: a(1), b(1), b'(1) and c(10-14). The alpha and beta chains form an alternating ring which encloses part of the gamma chain. F(1) is attached to F(0) by a central stalk formed by the gamma and epsilon chains, while a peripheral stalk is formed by the delta, b and b' chains.

It localises to the cellular thylakoid membrane. Its function is as follows. F(1)F(0) ATP synthase produces ATP from ADP in the presence of a proton or sodium gradient. F-type ATPases consist of two structural domains, F(1) containing the extramembraneous catalytic core and F(0) containing the membrane proton channel, linked together by a central stalk and a peripheral stalk. During catalysis, ATP synthesis in the catalytic domain of F(1) is coupled via a rotary mechanism of the central stalk subunits to proton translocation. Functionally, component of the F(0) channel, it forms part of the peripheral stalk, linking F(1) to F(0). This Synechococcus sp. (strain PCC 6716) protein is ATP synthase subunit b.